The chain runs to 340 residues: Conidiation-specific protein 13 (340 aa).

Positions 313–340 (AEAAAGISSGKPAADRKTKGKKGTKFRV) are disordered. Over residues 330-340 (TKGKKGTKFRV) the composition is skewed to basic residues.

The sequence is that of Conidiation-specific protein 13 (con-13) from Neurospora crassa (strain ATCC 24698 / 74-OR23-1A / CBS 708.71 / DSM 1257 / FGSC 987).